The chain runs to 1678 residues: Clathrin heavy chain (1678 aa).

7 WD40-like repeat regions span residues 24 to 67 (SFSF…RPIS), 68 to 107 (ADSA…MNED), 108 to 149 (VVFW…SSLN), 150 to 195 (GCQI…QAIE), 196 to 257 (GHAA…PEAQ), 258 to 301 (NDFP…ISAD), and 302 to 330 (TIFV…VTVD). 7 CHCR repeats span residues 538–684 (VAEE…QICV), 687–829 (ATKY…SEDI), 834–973 (ILVV…QLID), 980–1125 (LSET…VKEA), 1129–1270 (YIKA…FRLA), 1275–1421 (LHIV…LLLN), and 1424–1567 (LLVL…YDCF). Residues 1334 to 1643 (REHLELFWSR…IQMEPQLMIT (310 aa)) are involved in binding clathrin light chain. The segment at 1552–1677 (EELLGWFLER…AGGRNMGYPY (126 aa)) is trimerization.

This sequence belongs to the clathrin heavy chain family. As to quaternary structure, clathrin triskelions, composed of 3 heavy chains and 3 light chains, are the basic subunits of the clathrin coat. Interacts with sau.

It is found in the cytoplasmic vesicle membrane. It localises to the membrane. Its subcellular location is the coated pit. In terms of biological role, clathrin is the major protein of the polyhedral coat of coated pits and vesicles. In Drosophila melanogaster (Fruit fly), this protein is Clathrin heavy chain (Chc).